We begin with the raw amino-acid sequence, 367 residues long: Quinolinate synthase (367 aa).

2 residues coordinate iminosuccinate: His-45 and Ser-62. Cys-109 contacts [4Fe-4S] cluster. Residues 140-142 (YVN) and Ser-161 contribute to the iminosuccinate site. Cys-229 serves as a coordination point for [4Fe-4S] cluster. Iminosuccinate-binding positions include 255–257 (HPE) and Thr-272. Cys-319 contacts [4Fe-4S] cluster.

Belongs to the quinolinate synthase family. Type 3 subfamily. Requires [4Fe-4S] cluster as cofactor.

It is found in the cytoplasm. The enzyme catalyses iminosuccinate + dihydroxyacetone phosphate = quinolinate + phosphate + 2 H2O + H(+). It functions in the pathway cofactor biosynthesis; NAD(+) biosynthesis; quinolinate from iminoaspartate: step 1/1. In terms of biological role, catalyzes the condensation of iminoaspartate with dihydroxyacetone phosphate to form quinolinate. This chain is Quinolinate synthase, found in Anoxybacillus flavithermus (strain DSM 21510 / WK1).